The primary structure comprises 457 residues: Antizyme inhibitor 2 (457 aa).

The interval 115–138 is necessary for polyamine uptake stimulation; the sequence is QVAQIKYAAKHGVRLLSFDNEVEL.

It belongs to the Orn/Lys/Arg decarboxylase class-II family. ODC antizyme inhibitor subfamily. In terms of assembly, monomer. Interacts with OAZ1, OAZ2 and OAZ3; this interaction disrupts the interaction between the antizyme and ODC1. Does not form a heterodimer with ODC1. Post-translationally, ubiquitinated, leading to its proteasomal degradation; a process that is reduced in presence of antizymes. May also be degraded through the lysosomal degradative pathway in a proteasomal-independent manner.

It is found in the nucleus. The protein resides in the cytoplasm. Its subcellular location is the perinuclear region. It localises to the membrane. The protein localises to the cytoplasmic vesicle. It is found in the endoplasmic reticulum-Golgi intermediate compartment. The protein resides in the golgi apparatus. Its subcellular location is the cis-Golgi network. It localises to the trans-Golgi network. The protein localises to the cytoplasmic granule. It is found in the cell projection. The protein resides in the axon. Its subcellular location is the dendrite. It localises to the perikaryon. Its function is as follows. Antizyme inhibitor (AZI) protein that positively regulates ornithine decarboxylase (ODC) activity and polyamine uptake. AZI is an enzymatically inactive ODC homolog that counteracts the negative effect of ODC antizymes (AZs) OAZ1, OAZ2 and OAZ3 on ODC activity by competing with ODC for antizyme-binding. Inhibits antizyme-dependent ODC degradation and releases ODC monomers from their inactive complex with antizymes, leading to formation of the catalytically active ODC homodimer and restoring polyamine production. Participates in the morphological integrity of the trans-Golgi network (TGN) and functions as a regulator of intracellular secretory vesicle trafficking. The sequence is that of Antizyme inhibitor 2 (Azin2) from Rattus norvegicus (Rat).